A 336-amino-acid chain; its full sequence is CMP-sialic acid transporter (336 aa).

Residues 1–9 (MAQARENVS) lie on the Cytoplasmic side of the membrane. The helical transmembrane segment at 10-30 (LFFKLYCLAVMTLVAAAYTVA) threads the bilayer. The Lumenal portion of the chain corresponds to 31–45 (LRYTRTTAKELYFST). The chain crosses the membrane as a helical span at residues 46 to 64 (TAVCVTEVIKLLISVGLLA). Lysine 55 lines the CMP-N-acetyl-beta-neuraminate pocket. Residues 65-87 (KETGSLGRFKASLSENVLGSPKE) lie on the Cytoplasmic side of the membrane. Residues 88–108 (LMKLSVPSLVYAVQNNMAFLA) form a helical membrane-spanning segment. Position 101-102 (101-102 (QN)) interacts with CMP-N-acetyl-beta-neuraminate. Residues 109–114 (LSNLDA) lie on the Lumenal side of the membrane. A helical transmembrane segment spans residues 115 to 135 (AVYQVTYQLKIPCTALCTVLM). 117–124 (YQVTYQLK) contacts CMP-N-acetyl-beta-neuraminate. At 136 to 141 (LNRTLS) the chain is on the cytoplasmic side. A helical transmembrane segment spans residues 142–160 (KLQWVSVFMLCGGVILVQW). The Lumenal portion of the chain corresponds to 161-175 (KPAQATKVVVEQSPL). The helical transmembrane segment at 176–196 (LGFGAIAIAVLCSGFAGVYFE) threads the bilayer. Serine 188 serves as a coordination point for CMP-N-acetyl-beta-neuraminate. Residues 197–209 (KVLKSSDTSLWVR) lie on the Cytoplasmic side of the membrane. 210-214 (NIQMY) contributes to the CMP-N-acetyl-beta-neuraminate binding site. The helical transmembrane segment at 210-228 (NIQMYLSGIVVTLVGTYLS) threads the bilayer. The Lumenal segment spans residues 229-243 (DGAEIKEKGFFYGYT). The helical transmembrane segment at 244-262 (YYVWFVIFLASVGGLYTSV) threads the bilayer. At 263–269 (VVKYTDN) the chain is on the cytoplasmic side. The chain crosses the membrane as a helical span at residues 270-288 (IMKGFSAAAAIVLSTIASV). Lysine 272 lines the CMP-N-acetyl-beta-neuraminate pocket. Residues 289-296 (MLFGLQIT) are Lumenal-facing. The helical transmembrane segment at 297-315 (LSFAMGALLVCISIYLYGL) threads the bilayer. Residues 316-336 (PRQDTTCIQQEATSKERVIGV) lie on the Cytoplasmic side of the membrane. Residues 316-336 (PRQDTTCIQQEATSKERVIGV) form a disordered region.

This sequence belongs to the nucleotide-sugar transporter family. SLC35A subfamily. In terms of assembly, monomer.

It is found in the golgi apparatus membrane. It carries out the reaction CMP-N-acetyl-beta-neuraminate(in) + CMP(out) = CMP-N-acetyl-beta-neuraminate(out) + CMP(in). The catalysed reaction is CMP-N-acetyl-beta-neuraminate(in) + AMP(out) = CMP-N-acetyl-beta-neuraminate(out) + AMP(in). It catalyses the reaction CDP-L-ribitol(in) + CDP(out) = CDP-L-ribitol(out) + CDP(in). The enzyme catalyses UMP(out) + CMP-N-acetyl-beta-neuraminate(in) = UMP(in) + CMP-N-acetyl-beta-neuraminate(out). Functionally, transports CMP-sialic acid from the cytosol into the Golgi apparatus, functioning as an antiporter that exchanges CMP-sialic acid for CMP. Binds both CMP-sialic acid and free CMP, but has higher affinity for free CMP. Also able to exchange CMP-sialic acid for AMP and UMP. Also mediates the transport of CDP-ribitol. In Cricetulus griseus (Chinese hamster), this protein is CMP-sialic acid transporter (SLC35A1).